A 588-amino-acid chain; its full sequence is Neopullulanase (588 aa).

Positions 147, 149, 153, 172, and 174 each coordinate Ca(2+). Residues His-247 and Arg-326 each coordinate substrate. Asp-328 (nucleophile) is an active-site residue. Catalysis depends on Glu-357, which acts as the Proton donor. Substrate is bound by residues 423 to 424, Asp-468, and Arg-472; that span reads HD.

The protein belongs to the glycosyl hydrolase 13 family. Homodimer. The cofactor is Ca(2+).

It catalyses the reaction Hydrolysis of pullulan to panose (6-alpha-D-glucosylmaltose).. Hydrolyzes pullulan efficiently but only a small amount of starch. Endohydrolysis of 1,4-alpha-glucosidic linkages in pullulan to form panose. Also cleaves (1-6)-alpha-glucosidic linkages to form maltotriose. The polypeptide is Neopullulanase (nplT) (Geobacillus stearothermophilus (Bacillus stearothermophilus)).